A 335-amino-acid chain; its full sequence is Probable cytosolic iron-sulfur protein assembly protein Ciao1 (335 aa).

WD repeat units follow at residues 12-51 (GHKG…WSTK), 57-96 (GHKR…FECN), 101-140 (GHEN…EFEC), 146-185 (SHTQ…NDWD), 192-231 (SHTS…NSAG), 250-289 (QHSR…KPDE), and 301-335 (AHDQ…KVTE).

Belongs to the WD repeat CIA1 family.

Its function is as follows. Essential component of the cytosolic iron-sulfur (Fe/S) protein assembly machinery. Required for the maturation of extramitochondrial Fe/S proteins. The chain is Probable cytosolic iron-sulfur protein assembly protein Ciao1 from Drosophila erecta (Fruit fly).